A 102-amino-acid chain; its full sequence is NADH-quinone oxidoreductase subunit K (102 aa).

3 helical membrane passes run 6–26 (LIGM…GVLA), 30–50 (ILFQ…AFVA), and 63–83 (MLIL…ALLL).

This sequence belongs to the complex I subunit 4L family. NDH-1 is composed of 14 different subunits. Subunits NuoA, H, J, K, L, M, N constitute the membrane sector of the complex.

The protein resides in the cell inner membrane. It carries out the reaction a quinone + NADH + 5 H(+)(in) = a quinol + NAD(+) + 4 H(+)(out). In terms of biological role, NDH-1 shuttles electrons from NADH, via FMN and iron-sulfur (Fe-S) centers, to quinones in the respiratory chain. The immediate electron acceptor for the enzyme in this species is believed to be ubiquinone. Couples the redox reaction to proton translocation (for every two electrons transferred, four hydrogen ions are translocated across the cytoplasmic membrane), and thus conserves the redox energy in a proton gradient. The sequence is that of NADH-quinone oxidoreductase subunit K from Rhodopseudomonas palustris (strain HaA2).